The primary structure comprises 86 residues: MAGTGNDNPGNFANRPKEEVQAIASKGGQASHSGGFASMDPEKQREIASKGGKASSGSFEPGSEKAREAGRKGGKASGGTGADDDE.

Over residues 1–11 the composition is skewed to polar residues; the sequence is MAGTGNDNPGN. The tract at residues 1–86 is disordered; that stretch reads MAGTGNDNPG…SGGTGADDDE (86 aa). Residues 49 to 58 are compositionally biased toward low complexity; it reads SKGGKASSGS. The span at 62–71 shows a compositional bias: basic and acidic residues; the sequence is GSEKAREAGR. A compositionally biased stretch (gly residues) spans 75–86; that stretch reads KASGGTGADDDE.

Belongs to the con-10 family.

This is Conidiation-specific protein 10 (con-10) from Neurospora crassa (strain ATCC 24698 / 74-OR23-1A / CBS 708.71 / DSM 1257 / FGSC 987).